Here is a 516-residue protein sequence, read N- to C-terminus: MTYAWLWTLLAFVLTWMVFHLIKMKKAATGDLEAEAEARRDGATDVIIVGAGVAGASLAYALAKDGRRVHVIERDLKEPQRFMGELMQAGGRFMLAQLGLEDCLEDIDAQEAKSLAIYKDGKHATLPFPDDKSFPHEPVGRLLRNGRLVQRLRQKAASLSNVQLEEGTVKSLIEEEGVVKGVTYKNSAGEEITAFAPLTVVCDGCYSNLRRSLVDNTEEVLSYMVGYVTKNSRLEDPHSLHLIFSKPLVCVIYQITSDEVRCVAEVPADSIPSISNGEMSTFLKKSMAPQIPETGNLREIFLKGIEEGLPEIKSTATKSMSSRLCDKRGVIVLGDAFNMRHPIIASGMMVALSDICILRNLLKPLPNLSNTKKVSDLVKSFYIIRKPMSATVNTLASIFSQVLVATTDEAREGMRQGCFNYLARGDFKTRGLMTILGGMNPHPLTLVLHLVAITLTSMGHLLSPFPSPRRFWHSLRILAWALQMLGAHLVDEGFKEMLIPTNAAAYRRNYIATTTV.

2 helical membrane passes run T2 to I22 and A43 to A63. FAD is bound by residues V53–A54, E73–R74, R81, R153, V169, D335, and M348. Residues I435 to L455 form a helical membrane-spanning segment.

This sequence belongs to the squalene monooxygenase family. The cofactor is FAD. Expressed mainly in seedlings and inflorescences.

The protein localises to the membrane. The catalysed reaction is squalene + reduced [NADPH--hemoprotein reductase] + O2 = (S)-2,3-epoxysqualene + oxidized [NADPH--hemoprotein reductase] + H2O + H(+). Its pathway is terpene metabolism; lanosterol biosynthesis; lanosterol from farnesyl diphosphate: step 2/3. Its function is as follows. Catalyzes the stereospecific oxidation of squalene to (S)-2,3-epoxysqualene, and is considered to be a rate-limiting enzyme in steroid biosynthesis. The sequence is that of Squalene epoxidase 4 (SQE4) from Arabidopsis thaliana (Mouse-ear cress).